Here is a 348-residue protein sequence, read N- to C-terminus: Protein RecA (348 aa).

Glycine 65–threonine 72 is a binding site for ATP. Residues glutamine 326–glutamate 348 are disordered. Positions serine 336–glutamate 348 are enriched in acidic residues.

The protein belongs to the RecA family.

It localises to the cytoplasm. In terms of biological role, can catalyze the hydrolysis of ATP in the presence of single-stranded DNA, the ATP-dependent uptake of single-stranded DNA by duplex DNA, and the ATP-dependent hybridization of homologous single-stranded DNAs. It interacts with LexA causing its activation and leading to its autocatalytic cleavage. The polypeptide is Protein RecA (Campylobacter hominis (strain ATCC BAA-381 / DSM 21671 / CCUG 45161 / LMG 19568 / NCTC 13146 / CH001A)).